The chain runs to 479 residues: Aryl-phospho-beta-D-glucosidase BglA (479 aa).

The active-site Proton donor is E176. Residue E377 is the Nucleophile of the active site.

Belongs to the glycosyl hydrolase 1 family.

It carries out the reaction 6-phospho-beta-D-glucosyl-(1-&gt;4)-D-glucose + H2O = D-glucose 6-phosphate + D-glucose. Its function is as follows. Catalyzes the hydrolysis of aryl-phospho-beta-D-glucosides such as 4-methylumbelliferyl-phospho-beta-D-glucopyranoside (MUG-P), phosphoarbutin and phosphosalicin. Plays a major role in the utilization of arbutin or salicin as the sole carbon source. BglA and BglH are the major proteins contributing to hydrolysis of MUG-P by extracts of late-exponential-phase or stationary-phase B.subtilis cells. In Bacillus subtilis (strain 168), this protein is Aryl-phospho-beta-D-glucosidase BglA (bglA).